The sequence spans 142 residues: uncharacterized protein (142 aa).

One can recognise an N-acetyltransferase domain in the interval 1 to 138 (MLEKLAEAHP…SFMILVKPLA (138 aa)).

This is an uncharacterized protein from Bacillus subtilis (strain 168).